Reading from the N-terminus, the 228-residue chain is Fibrillarin-like rRNA/tRNA 2'-O-methyltransferase (228 aa).

Residues 85-86 (TT), 103-104 (EF), 128-129 (DA), and 148-151 (DVAQ) each bind S-adenosyl-L-methionine.

Belongs to the methyltransferase superfamily. Fibrillarin family. In terms of assembly, interacts with nop5. Component of box C/D small ribonucleoprotein (sRNP) particles that contain rpl7ae, FlpA and nop5, plus a guide RNA.

In terms of biological role, involved in pre-rRNA and tRNA processing. Utilizes the methyl donor S-adenosyl-L-methionine to catalyze the site-specific 2'-hydroxyl methylation of ribose moieties in rRNA and tRNA. Site specificity is provided by a guide RNA that base pairs with the substrate. Methylation occurs at a characteristic distance from the sequence involved in base pairing with the guide RNA. In Methanococcus voltae, this protein is Fibrillarin-like rRNA/tRNA 2'-O-methyltransferase.